The sequence spans 118 residues: Large ribosomal subunit protein bL19 (118 aa).

Belongs to the bacterial ribosomal protein bL19 family.

In terms of biological role, this protein is located at the 30S-50S ribosomal subunit interface and may play a role in the structure and function of the aminoacyl-tRNA binding site. This chain is Large ribosomal subunit protein bL19, found in Campylobacter lari (strain RM2100 / D67 / ATCC BAA-1060).